We begin with the raw amino-acid sequence, 649 residues long: Acetylcholinesterase (649 aa).

The signal sequence occupies residues 1-38; sequence MAISCRQSRVLPMSLPLPLTIPLPLVLVLSLHLSGVCG. A disulfide bridge links Cys-104 with Cys-131. N-linked (GlcNAc...) asparagine glycosylation is found at Asn-126 and Asn-174. Ser-276 (acyl-ester intermediate) is an active-site residue. The cysteines at positions 330 and 345 are disulfide-linked. Asn-331 carries an N-linked (GlcNAc...) asparagine glycan. Residues Glu-405 and His-518 each act as charge relay system in the active site. Residues Cys-480 and Cys-598 are joined by a disulfide bond. Asn-531 carries an N-linked (GlcNAc...) asparagine glycan. Ser-619 carries the GPI-anchor amidated serine lipid modification. Positions 620-649 are cleaved as a propeptide — removed in mature form; that stretch reads GSASISPRLQLLGIAALIYICAALRTKRVF.

It belongs to the type-B carboxylesterase/lipase family. As to quaternary structure, homodimer; disulfide-linked. The active unit is formed by non-covalent association of the 55 kDa and 16 kDa subunits. Proteolytic cleavage into the 16 kDa subunit and the 55 kDa subunits originates from the hydrophilic peptide, aa 148-180, and is associated with excretion out of the cell. Post-translationally, neither N-glycosylation nor dimerization is required for enzyme activity or substrate specificity, but protects the protein against proteolytic digestion.

It localises to the synapse. It is found in the cell membrane. It carries out the reaction acetylcholine + H2O = choline + acetate + H(+). In terms of biological role, rapidly hydrolyzes choline released into the synapse. It can hydrolyze butyrylthiocholine. The sequence is that of Acetylcholinesterase (Ace) from Drosophila melanogaster (Fruit fly).